A 214-amino-acid chain; its full sequence is MNNLKRFTKSIFSCIALSGLLFLGGCETLPPTTDLSPITVDNAAQAKAWELQGKLAIRTPEDKLSANLYWRHSEERDELTLTTMLGTTVLTLDATPNSAHLHVDGKDFRDSNAQALLERVSGWSIPINDLPLWITGQIGALDRVLAVDSNGKTKQIQNSQTLPPWDVTFLSWQPQSGAEVPYQLKLERGDLQLKLQLNQWQALGKPSIMLGEKP.

Residues methionine 1 to glycine 25 form the signal peptide. Cysteine 26 is lipidated: N-palmitoyl cysteine. Cysteine 26 carries the S-diacylglycerol cysteine lipid modification.

It belongs to the LolB family. In terms of assembly, monomer.

The protein localises to the cell outer membrane. Plays a critical role in the incorporation of lipoproteins in the outer membrane after they are released by the LolA protein. This chain is Outer-membrane lipoprotein LolB, found in Shewanella sp. (strain MR-4).